Reading from the N-terminus, the 156-residue chain is V-type proton ATPase 16 kDa proteolipid subunit c (156 aa).

At 1–7 the chain is on the lumenal side; that stretch reads MAENPIY. Residues 8 to 30 traverse the membrane as a helical segment; the sequence is GPFFGVMGAASAIIFSALGAAYG. Over 31–52 the chain is Cytoplasmic; the sequence is TAKSGTGIAAMSVMRPELIMKS. The chain crosses the membrane as a helical span at residues 53 to 73; the sequence is IIPVVMAGIIAIYGLVVAVLI. Residues 74-92 lie on the Lumenal side of the membrane; the sequence is AGSLDSPSNNYTLYRGFIH. The chain crosses the membrane as a helical span at residues 93 to 114; that stretch reads LGAGLAVGFSGLAAGFAIGIVG. Residues 115-126 lie on the Cytoplasmic side of the membrane; that stretch reads DAGVRGTAQQPR. A helical membrane pass occupies residues 127-152; it reads LFVGMILILIFAEVLGLYGLIVAIYL. The Lumenal segment spans residues 153–156; it reads YTKQ.

The protein belongs to the V-ATPase proteolipid subunit family. As to quaternary structure, V-ATPase is a heteromultimeric enzyme made up of two complexes: the ATP-hydrolytic V1 complex and the proton translocation V0 complex. The V1 complex consists of three catalytic AB heterodimers that form a heterohexamer, three peripheral stalks each consisting of EG heterodimers, one central rotor including subunits D and F, and the regulatory subunits C and H. The proton translocation complex V0 consists of the proton transport subunit a, a ring of proteolipid subunits c9c'', rotary subunit d, subunits e and f, and the accessory subunits VhaAC45 and ATP6AP2.

It is found in the membrane. Its function is as follows. Proton-conducting pore forming subunit of the V0 complex of vacuolar(H+)-ATPase (V-ATPase), a multisubunit enzyme composed of a peripheral complex (V1) that hydrolyzes ATP and a membrane integral complex (V0) that translocates protons. V-ATPase is responsible for acidifying and maintaining the pH of intracellular compartments and in some cell types, is targeted to the plasma membrane, where it is responsible for acidifying the extracellular environment. The polypeptide is V-type proton ATPase 16 kDa proteolipid subunit c (VHA16) (Manduca sexta (Tobacco hawkmoth)).